Here is a 664-residue protein sequence, read N- to C-terminus: UvrABC system protein B (664 aa).

Residues 24 to 182 (AGLRAGYRHQ…QLIDLQFERN (159 aa)) enclose the Helicase ATP-binding domain. Position 37–44 (37–44 (GATGTGKT)) interacts with ATP. Residues 90–113 (YYDEYTPEAYVPSKDLYIEKEASI) carry the Beta-hairpin motif. One can recognise a Helicase C-terminal domain in the interval 427 to 593 (QIDDLLGEIR…GIAKGVRDLT (167 aa)). The 36-residue stretch at 624 to 659 (LKLIKDLEKQMKQAAKALAFEKAAALRDQIVELRQA) folds into the UVR domain.

It belongs to the UvrB family. Forms a heterotetramer with UvrA during the search for lesions. Interacts with UvrC in an incision complex.

It localises to the cytoplasm. In terms of biological role, the UvrABC repair system catalyzes the recognition and processing of DNA lesions. A damage recognition complex composed of 2 UvrA and 2 UvrB subunits scans DNA for abnormalities. Upon binding of the UvrA(2)B(2) complex to a putative damaged site, the DNA wraps around one UvrB monomer. DNA wrap is dependent on ATP binding by UvrB and probably causes local melting of the DNA helix, facilitating insertion of UvrB beta-hairpin between the DNA strands. Then UvrB probes one DNA strand for the presence of a lesion. If a lesion is found the UvrA subunits dissociate and the UvrB-DNA preincision complex is formed. This complex is subsequently bound by UvrC and the second UvrB is released. If no lesion is found, the DNA wraps around the other UvrB subunit that will check the other stand for damage. The polypeptide is UvrABC system protein B (Chloroflexus aggregans (strain MD-66 / DSM 9485)).